Reading from the N-terminus, the 845-residue chain is Synaptonemal complex protein 1 (845 aa).

The tract at residues E59–Q215 is interaction with SYCE3. 2 coiled-coil regions span residues Y64 to E211 and L244 to V544. Residues E550–E644 form a required for pH-induced assembly of C-terminal ends into antiparallel tetramers region. Residues L553–V556 carry the Nuclear localization signal motif. The stretch at K620–D663 forms a coiled coil. The DNA-binding stretch occupies residues N657–A845. At S676 the chain carries Phosphoserine. The segment covering F684–S703 has biased composition (polar residues). A disordered region spans residues F684 to N709. The short motif at K753–K756 is the Nuclear localization signal element. The segment at L786 to P808 is disordered.

As to quaternary structure, structural component of synaptonemal complexes. Homotetramer that consists of an N-terminal four-helical bundle that bifurcates into two elongated C-terminal dimeric coiled coils. This tetrameric building block potentially self-assembles into a supramolecular zipper-like lattice to mediate meiotic chromosome synapsis. Self-assembly is likely initiated by local proton density at chromosome axis, which is predicted to trigger antiparallel back to back assembly of adjacent C-terminal ends into tetrameric structures that anchor to chromosomal DNA. Then the N-terminal ends are predicted to undergo cooperative antiparallel head to head assembly at the midline of synaptonemal complexes central element to form a zipper-like lattice between properly aligned homologous chromosomes. The nascent synapsis generated by SYCP1 is stabilized through interaction with central element proteins SYCE1 and SYCE2. Interacts (via tetrameric core) with SYCE3; the interaction remodels SYCP1 homotetramers to 2:1 heterotrimers with SYCE3. SYCP1/SYCE3 heterotrimers form lattice assemblies as part of the mature synaptonemal complex via both lateral and head-to-head interactions. Forms a complex with EWSR1, PRDM9, SYCP3 and REC8; complex formation is dependent of phosphorylated form of REC8 and requires PRDM9 bound to hotspot DNA; EWSR1 joins PRDM9 with the chromosomal axis through REC8. Interacts with SPO16.

Its subcellular location is the nucleus. It is found in the chromosome. The protein localises to the centromere. Functionally, major component of the transverse filaments of synaptonemal complexes, formed between homologous chromosomes during meiotic prophase. Required for normal assembly of the central element of the synaptonemal complexes. Required for normal centromere pairing during meiosis. Required for normal meiotic chromosome synapsis during oocyte and spermatocyte development and for normal male and female fertility. The chain is Synaptonemal complex protein 1 from Mesocricetus auratus (Golden hamster).